The primary structure comprises 117 residues: Photosystem II reaction center Psb28 protein (117 aa).

Belongs to the Psb28 family. As to quaternary structure, part of the photosystem II complex.

The protein localises to the cellular thylakoid membrane. The polypeptide is Photosystem II reaction center Psb28 protein (Prochlorococcus marinus (strain MIT 9312)).